A 524-amino-acid polypeptide reads, in one-letter code: Bifunctional purine biosynthesis protein PurH (524 aa).

An MGS-like domain is found at 1 to 154 (MTRLALLSTS…KNHAHVTVLC (154 aa)).

It belongs to the PurH family.

It carries out the reaction (6R)-10-formyltetrahydrofolate + 5-amino-1-(5-phospho-beta-D-ribosyl)imidazole-4-carboxamide = 5-formamido-1-(5-phospho-D-ribosyl)imidazole-4-carboxamide + (6S)-5,6,7,8-tetrahydrofolate. The enzyme catalyses IMP + H2O = 5-formamido-1-(5-phospho-D-ribosyl)imidazole-4-carboxamide. The protein operates within purine metabolism; IMP biosynthesis via de novo pathway; 5-formamido-1-(5-phospho-D-ribosyl)imidazole-4-carboxamide from 5-amino-1-(5-phospho-D-ribosyl)imidazole-4-carboxamide (10-formyl THF route): step 1/1. It functions in the pathway purine metabolism; IMP biosynthesis via de novo pathway; IMP from 5-formamido-1-(5-phospho-D-ribosyl)imidazole-4-carboxamide: step 1/1. This is Bifunctional purine biosynthesis protein PurH from Acaryochloris marina (strain MBIC 11017).